Reading from the N-terminus, the 654-residue chain is C6 finger domain transcription factor nscR (654 aa).

Positions 17–43 (CELCRERKVKCDKLDPCTNCSSAGVIC) form a DNA-binding region, zn(2)-C6 fungal-type.

It is found in the nucleus. Its function is as follows. Transcription factor that specifically regulates the neosartoricin B biosynthesis gene cluster. This Trichophyton verrucosum (strain HKI 0517) protein is C6 finger domain transcription factor nscR.